Consider the following 145-residue polypeptide: Large ribosomal subunit protein uL15 (145 aa).

Residues 1–58 (MFSLLKPKGAAKRRKIVGRGPGSGLGKTSGRGQKGQKARNTSPRLGFEGGQTPLYRRL) are disordered. Residues 19-33 (RGPGSGLGKTSGRGQ) show a composition bias toward gly residues.

The protein belongs to the universal ribosomal protein uL15 family. As to quaternary structure, part of the 50S ribosomal subunit.

In terms of biological role, binds to the 23S rRNA. The sequence is that of Large ribosomal subunit protein uL15 from Borreliella afzelii (strain PKo) (Borrelia afzelii).